Consider the following 1577-residue polypeptide: Dynamin-binding protein (1577 aa).

Met1 carries the N-acetylmethionine modification. 4 consecutive SH3 domains span residues 2–61 (EAGS…IVTI), 66–126 (EGER…ELCL), 145–204 (YSMG…LLGP), and 243–302 (EPGT…LCPD). Disordered regions lie at residues 211–244 (SVSS…EEEP) and 335–395 (EEQR…WEMP). The span at 230–244 (VGEEEIGPDEDEEEP) shows a compositional bias: acidic residues. Positions 335–344 (EEQRHETSDH) are enriched in basic and acidic residues. Phosphoserine is present on Ser496. Disordered regions lie at residues 591–624 (GSSK…TSPH) and 639–659 (VRPS…NAVS). A compositionally biased stretch (pro residues) spans 639–649 (VRPSRPAPLPP). The residue at position 684 (Ser684) is a Phosphoserine. Residues 693–757 (LVLVRIEEME…ELQQLREMTL (65 aa)) adopt a coiled-coil conformation. Residues 784-967 (KRAKVIEELL…KEINVNINEY (184 aa)) form the DH domain. One can recognise a BAR domain in the interval 1008 to 1217 (LKHLTGFAPQ…LKVAGREGNL (210 aa)). Residues 1136 to 1173 (ERAEKLKDKKTLEELQSARNNYEALNAQLLDELPKFHQ) adopt a coiled-coil conformation. Residues 1285–1348 (PPEKLFQAER…YSSFLKPYNP (64 aa)) enclose the SH3 5 domain. The disordered stretch occupies residues 1348–1487 (PRRSHSDASV…SVPGRNGQSQ (140 aa)). Positions 1376 to 1405 (RQNSGSTLTFNPSSMAVSFTSGSCQKQPQD) are enriched in polar residues. The span at 1419–1442 (SASLNPSNSESSPSRCPSDPDSTS) shows a compositional bias: low complexity. The 64-residue stretch at 1513-1576 (EGNQVYFAVY…PSNYIRKTEY (64 aa)) folds into the SH3 6 domain.

As to quaternary structure, binds DNM1 via its N-terminal SH3 domains. The C-terminal SH3 domain binds a complex containing actin, tubulin, Hsp70 and actin-regulatory proteins, such as ENAH, EVL, WIRE, CR16, WAVE1 and NAP1L1. Interacts with FASLG. Interacts (via SH3 domain 6) with WASL. Interacts (via SH3 domain 6) interacts with ENAH. Interacts (via C-terminal domain) with TJP1; required for the apical cell-cell junction localization of DNMBP. (Microbial infection) Interacts (via SH3 domain 6) with L.monocytogenes InlC. Detected in heart, brain, lung, liver, skeletal muscle, kidney and pancreas.

The protein localises to the cytoplasm. It localises to the golgi apparatus. It is found in the golgi stack. The protein resides in the cytoskeleton. Its subcellular location is the synapse. The protein localises to the cell junction. Its function is as follows. Plays a critical role as a guanine nucleotide exchange factor (GEF) for CDC42 in several intracellular processes associated with the actin and microtubule cytoskeleton. Regulates the structure of apical junctions through F-actin organization in epithelial cells. Participates in the normal lumenogenesis of epithelial cell cysts by regulating spindle orientation. Plays a role in ciliogenesis. May play a role in membrane trafficking between the cell surface and the Golgi. The polypeptide is Dynamin-binding protein (Homo sapiens (Human)).